Reading from the N-terminus, the 349-residue chain is MDLFDRLKELREQGLAEIKEAESEKSLNDVRVKLVGKKGELTQILHQMKDVAPEKRREVGQKVNELRDLFNENLASAKDNLIEKAIEARLEAEKIDVTLPGRRKHVGSKHPIRIIQDDLERFFIGMGYQVVQGPEIESEHYNFEMLNLPKDHPARDMQATFYVDADHLLRSQTSPVQARTMEKHDFDKGDLKMISPGKVYRRDDDDATHSHQFMQMEGLVVGKNISLSDLKGTLELVAKHEFGQDRETRLRPSYFPFTEPSVEMDVSCFECGGKGCAICKNTGWIEVLGAGIVHPNVLSAAGIDPSVYSGFAFGLGLDRFAILKYGIDDIRDFYSDDVRFLQQFRQEED.

Glutamate 259 lines the Mg(2+) pocket.

Belongs to the class-II aminoacyl-tRNA synthetase family. Phe-tRNA synthetase alpha subunit type 1 subfamily. In terms of assembly, tetramer of two alpha and two beta subunits. It depends on Mg(2+) as a cofactor.

It localises to the cytoplasm. The enzyme catalyses tRNA(Phe) + L-phenylalanine + ATP = L-phenylalanyl-tRNA(Phe) + AMP + diphosphate + H(+). The polypeptide is Phenylalanine--tRNA ligase alpha subunit (Lactobacillus delbrueckii subsp. bulgaricus (strain ATCC 11842 / DSM 20081 / BCRC 10696 / JCM 1002 / NBRC 13953 / NCIMB 11778 / NCTC 12712 / WDCM 00102 / Lb 14)).